A 382-amino-acid polypeptide reads, in one-letter code: MIKSALLVLEDGTQFHGRAIGATGSAVGEVVFNTSMTGYQEILTDPSYSRQIVTLTYPHIGNVGTNDADEESSQVHAQGLVIRDLPLIASNFRNTEDLSSYLKRHNIVAIADIDTRKLTRLLREKGAQNGCIIAGDNPDAALALEKARAFPGLNGMDLAKEVTTAEPYSWTQGSWTLTGGLPEAKKEDELPYHVVAYDFGAKRNILRMLVDRGCRLTIVPAQTSAEDVLKMNPDGIFLSNGPGDPAPCDYAITAIQKFLETDIPVFGICLGHQLLALASGAKTVKMKFGHHGGNHPVKDVEKNVVMITAQNHGFAVDEATLPANLRVTHKSLFDGTLQGIHRTDKPAFSFQGHPEASPGPHDAAPLFDHFIALIEQYRKTAK.

Residues 1–189 (MIKSALLVLE…GLPEAKKEDE (189 aa)) form a CPSase region. The L-glutamine site is built by Ser-47, Gly-241, and Gly-243. The 188-residue stretch at 193–380 (HVVAYDFGAK…IALIEQYRKT (188 aa)) folds into the Glutamine amidotransferase type-1 domain. The active-site Nucleophile is Cys-269. The L-glutamine site is built by Leu-270, Gln-273, Asn-311, Gly-313, and Phe-314. Residues His-353 and Glu-355 contribute to the active site.

It belongs to the CarA family. Composed of two chains; the small (or glutamine) chain promotes the hydrolysis of glutamine to ammonia, which is used by the large (or ammonia) chain to synthesize carbamoyl phosphate. Tetramer of heterodimers (alpha,beta)4.

It catalyses the reaction hydrogencarbonate + L-glutamine + 2 ATP + H2O = carbamoyl phosphate + L-glutamate + 2 ADP + phosphate + 2 H(+). It carries out the reaction L-glutamine + H2O = L-glutamate + NH4(+). The protein operates within amino-acid biosynthesis; L-arginine biosynthesis; carbamoyl phosphate from bicarbonate: step 1/1. It functions in the pathway pyrimidine metabolism; UMP biosynthesis via de novo pathway; (S)-dihydroorotate from bicarbonate: step 1/3. In terms of biological role, small subunit of the glutamine-dependent carbamoyl phosphate synthetase (CPSase). CPSase catalyzes the formation of carbamoyl phosphate from the ammonia moiety of glutamine, carbonate, and phosphate donated by ATP, constituting the first step of 2 biosynthetic pathways, one leading to arginine and/or urea and the other to pyrimidine nucleotides. The small subunit (glutamine amidotransferase) binds and cleaves glutamine to supply the large subunit with the substrate ammonia. The chain is Carbamoyl phosphate synthase small chain from Escherichia coli O6:H1 (strain CFT073 / ATCC 700928 / UPEC).